We begin with the raw amino-acid sequence, 439 residues long: Rhodopsin (439 aa).

Asn-1 carries N-linked (GlcNAc...) asparagine glycosylation. The Extracellular portion of the chain corresponds to 1–26; sequence NETWWYNPYMDIHSHWKQFDQVPAAV. A helical transmembrane segment spans residues 27 to 51; sequence YYSLGIFIAICGIIGCAGNGIVIYL. At 52-63 the chain is on the cytoplasmic side; it reads FTKTKSLQTPAN. The chain crosses the membrane as a helical span at residues 64-90; sequence MFIINLAFSDFTFSLVNGFPMMTISCF. At 91–102 the chain is on the extracellular side; it reads LKHWVFGQAACK. Cys-101 and Cys-179 form a disulfide bridge. A helical membrane pass occupies residues 103 to 124; sequence VYGLIGGIFGLTSIMTMTMISI. A 'Ionic lock' involved in activated form stabilization motif is present at residues 125-127; that stretch reads DRY. The Cytoplasmic segment spans residues 125–144; sequence DRYNVIRRPMSASKKMSHRK. Residues 145-165 traverse the membrane as a helical segment; that stretch reads AFIMIVFVWIWSTIWAIGPIF. The Extracellular segment spans residues 166–192; that stretch reads GWGAYQLEGVLCNCSFDYITRDASTRS. Residues 193–217 form a helical membrane-spanning segment; it reads NIVCMYIFAFMFPIVVIFFCYFNIV. Residues 218–254 lie on the Cytoplasmic side of the membrane; sequence MSVSNHEKEMAAMAKRLNAKELRKAQAGASAEMKLAK. The helical transmembrane segment at 255–276 threads the bilayer; that stretch reads ISIVIVTQSLLSWSPYAIVALL. At 277 to 286 the chain is on the extracellular side; it reads AQFGPIEWVT. The chain crosses the membrane as a helical span at residues 287–308; the sequence is PYAAQLPVMFAKASAIHNPMIY. Residue Lys-298 is modified to N6-(retinylidene)lysine. At 309-439 the chain is on the cytoplasmic side; that stretch reads SVSHPKFREA…PQAAPPQGVD (131 aa). 2 S-palmitoyl cysteine lipidation sites follow: Cys-329 and Cys-330. Low complexity predominate over residues 369–381; it reads MMQKMQAQQQQQP. A disordered region spans residues 369–439; sequence MMQKMQAQQQ…PQAAPPQGVD (71 aa). The span at 382 to 433 shows a compositional bias: pro residues; the sequence is AYPPQGYPPQGYPPPPPQGYPPQGYPPQGYPPQGYPPPPQGPPPQGPPPQAA.

Belongs to the G-protein coupled receptor 1 family. Opsin subfamily. In terms of processing, contains one covalently linked retinal chromophore. Upon light absorption, the covalently bound 11-cis-retinal is converted to all-trans-retinal. After hydrolysis of the Schiff base and release of the covalently bound all-trans-retinal, active rhodopsin is regenerated by binding of a fresh molecule of 11-cis-retinal.

It localises to the cell projection. The protein localises to the rhabdomere membrane. Photoreceptor required for image-forming vision at low light intensity. Light-induced isomerization of 11-cis to all-trans retinal triggers a conformational change that activates signaling via G-proteins. Signaling mediates the activation of phospholipase C. Subsequent receptor phosphorylation mediates displacement of the bound G-protein alpha subunit by arrestin and terminates signaling. The protein is Rhodopsin (RHO) of Alloteuthis subulata (Squid).